A 224-amino-acid polypeptide reads, in one-letter code: Uridylate kinase (224 aa).

9 to 10 (GS) is a binding site for ATP. Gly43 provides a ligand contact to UMP. Residues Gly44 and Arg48 each contribute to the ATP site. UMP contacts are provided by residues Asp65 and 113–119 (TEPAHST). ATP is bound by residues Thr139, Tyr145, and Asp148.

Belongs to the UMP kinase family. In terms of assembly, homohexamer.

It localises to the cytoplasm. It carries out the reaction UMP + ATP = UDP + ADP. The protein operates within pyrimidine metabolism; CTP biosynthesis via de novo pathway; UDP from UMP (UMPK route): step 1/1. Inhibited by UTP. Catalyzes the reversible phosphorylation of UMP to UDP. The sequence is that of Uridylate kinase from Methanothermobacter thermautotrophicus (strain ATCC 29096 / DSM 1053 / JCM 10044 / NBRC 100330 / Delta H) (Methanobacterium thermoautotrophicum).